The chain runs to 297 residues: PAK4-inhibitor INKA2 (297 aa).

Disordered stretches follow at residues 82 to 109 (GRGP…PSHR), 175 to 200 (LEKG…PQEL), and 234 to 285 (TPMV…LEHS). Residues 92–102 (SPSSQPSLGSS) are compositionally biased toward low complexity. An inka box region spans residues 137-180 (EPDDWTSTLMSRGRNRQPLVLGDNVFADLVGNWLDLPELEKGGE). Positions 244–253 (RSQKVKKRSL) are enriched in basic residues.

It belongs to the INKA family. In terms of assembly, interacts with PAK4.

The protein localises to the nucleus. In terms of biological role, inhibitor of the serine/threonine-protein kinase PAK4. Acts by binding PAK4 in a substrate-like manner, inhibiting the protein kinase activity. The polypeptide is PAK4-inhibitor INKA2 (Homo sapiens (Human)).